The following is a 227-amino-acid chain: Lectin (227 aa).

A signal peptide spans 1 to 28 (MTMTSTTTKAMAMAAAVLAAAAVAATNA). Q29 bears the Pyrrolidone carboxylic acid mark. 4 consecutive Chitin-binding type-1 domains span residues 29 to 70 (QTCG…ACCS), 71 to 113 (SQRC…PCRA), 114 to 156 (DIKC…ACCP), and 157 to 199 (EKRC…GCYK). 16 disulfides stabilise this stretch: C31–C46, C40–C52, C45–C59, C63–C68, C74–C89, C83–C95, C88–C102, C106–C111, C117–C132, C126–C138, C131–C145, C149–C154, C160–C175, C169–C181, C174–C188, and C192–C197. 38–40 (MIC) serves as a coordination point for substrate. A substrate-binding site is contributed by 90-101 (SQYGYCGFGSEY). Residue 142–143 (SE) coordinates substrate. The propeptide occupies 202 to 227 (DGMAAILANNQSVSFEGIIESVAELV). N-linked (GlcNAc...) asparagine glycosylation occurs at N211.

Functionally, N-acetyl-D-glucosamine binding lectin. The sequence is that of Lectin from Oryza sativa subsp. indica (Rice).